A 377-amino-acid chain; its full sequence is 2-aminoethylphosphonate--pyruvate transaminase (377 aa).

Lys194 bears the N6-(pyridoxal phosphate)lysine mark.

The protein belongs to the class-V pyridoxal-phosphate-dependent aminotransferase family. PhnW subfamily. As to quaternary structure, homodimer. The cofactor is pyridoxal 5'-phosphate.

It catalyses the reaction (2-aminoethyl)phosphonate + pyruvate = phosphonoacetaldehyde + L-alanine. Its function is as follows. Involved in phosphonate degradation. This chain is 2-aminoethylphosphonate--pyruvate transaminase, found in Cupriavidus necator (strain ATCC 17699 / DSM 428 / KCTC 22496 / NCIMB 10442 / H16 / Stanier 337) (Ralstonia eutropha).